The following is a 1057-amino-acid chain: Probable E3 ubiquitin-protein ligase HERC4 (1057 aa).

RCC1 repeat units follow at residues 1 to 51, 52 to 101, 102 to 154, 156 to 207, 208 to 259, 261 to 311, and 313 to 366; these read MLCW…FVLD, DGTV…ALND, KGQV…ALSK, SEVF…VLTL, SGAI…ALTK, GGVF…AFVP, and SGRI…CVKR. Positions 730–1057 constitute an HECT domain; sequence KNIDYKKPLK…IDHNEGFSLI (328 aa). The active-site Glycyl thioester intermediate is Cys-1025.

In terms of tissue distribution, ubiquitously expressed, highest expression is found in testis during spermiogenesis. It is specifically found in spermatogonia, spermatocytes, and spermatids with little or no expression detectable in the spermatozoa, or interstitial cells.

Its subcellular location is the cytoplasm. It localises to the cytosol. It catalyses the reaction S-ubiquitinyl-[E2 ubiquitin-conjugating enzyme]-L-cysteine + [acceptor protein]-L-lysine = [E2 ubiquitin-conjugating enzyme]-L-cysteine + N(6)-ubiquitinyl-[acceptor protein]-L-lysine.. The protein operates within protein modification; protein ubiquitination. Its function is as follows. Probable E3 ubiquitin-protein ligase involved in either protein trafficking or in the distribution of cellular structures. Required for spermatozoon maturation and fertility, and for the removal of the cytoplasmic droplet of the spermatozoon. E3 ubiquitin-protein ligases accept ubiquitin from an E2 ubiquitin-conjugating enzyme in the form of a thioester and then directly transfer it to targeted substrates. The polypeptide is Probable E3 ubiquitin-protein ligase HERC4 (Herc4) (Mus musculus (Mouse)).